The sequence spans 147 residues: Large ribosomal subunit protein bL9 (147 aa).

Belongs to the bacterial ribosomal protein bL9 family.

Binds to the 23S rRNA. The chain is Large ribosomal subunit protein bL9 from Geobacter sp. (strain M21).